The chain runs to 879 residues: Metabotropic glutamate receptor 3 (879 aa).

The first 22 residues, 1-22, serve as a signal peptide directing secretion; it reads MKMLTRLQILMLALFSKGFLLS. Topologically, residues 23–576 are extracellular; it reads LGDHNFMRRE…EDYIKWEDAW (554 aa). Cysteine 57 and cysteine 99 are oxidised to a cystine. L-glutamate is bound by residues arginine 68, serine 151, and 172–174; that span reads AST. Asparagine 209 carries N-linked (GlcNAc...) asparagine glycosylation. An L-glutamate-binding site is contributed by tyrosine 222. Intrachain disulfides connect cysteine 240–cysteine 527, cysteine 361–cysteine 373, cysteine 412–cysteine 419, cysteine 509–cysteine 528, cysteine 513–cysteine 531, cysteine 534–cysteine 546, and cysteine 549–cysteine 562. Residue asparagine 292 is glycosylated (N-linked (GlcNAc...) asparagine). L-glutamate is bound at residue aspartate 301. Lysine 389 is an L-glutamate binding site. 2 N-linked (GlcNAc...) asparagine glycosylation sites follow: asparagine 414 and asparagine 439. A helical membrane pass occupies residues 577 to 599; sequence AIGPVTIACLGFLCTCIVITVFI. The Cytoplasmic segment spans residues 600 to 613; the sequence is KHNNTPLVKASGRE. Residues 614–634 traverse the membrane as a helical segment; that stretch reads LCYILLFGVSLSYCMTFFFIA. The Extracellular portion of the chain corresponds to 635-645; it reads KPSPVICALRR. The helical transmembrane segment at 646 to 664 threads the bilayer; the sequence is LGLGTSFAICYSALLTKTN. Residues 665–688 lie on the Cytoplasmic side of the membrane; the sequence is CIARIFDGVKNGAQRPKFISPSSQ. A helical transmembrane segment spans residues 689–709; that stretch reads VFICLGLILVQIVMVSVWLIL. Over 710–734 the chain is Extracellular; it reads ETPGTRRYTLPEKRETVILKCNVKD. Residues 735-756 form a helical membrane-spanning segment; that stretch reads SSMLISLTYDVVLVILCTVYAF. Residues 757–769 are Cytoplasmic-facing; that stretch reads KTRKCPENFNEAK. Residues 770–792 traverse the membrane as a helical segment; it reads FIGFTMYTTCIIWLAFLPIFYVT. The Extracellular segment spans residues 793-802; sequence SSDYRVQTTT. Residues 803–828 form a helical membrane-spanning segment; the sequence is MCISVSLSGFVVLGCLFAPKVHIVLF. The Cytoplasmic portion of the chain corresponds to 829 to 879; sequence QPQKNVVTHRLHLNRFSVSGTATTYSQSSASTYVPTVCNGREVLDSTTSSL.

Belongs to the G-protein coupled receptor 3 family. As to quaternary structure, interacts with TAMALIN. As to expression, is widely distributed in the CNS. Predominant expression is seen in the neuronal cells of the cerebral cortex, dentate gyrus, and glial cells throughout brain regions.

The protein localises to the cell membrane. Functionally, G-protein coupled receptor for glutamate. Ligand binding causes a conformation change that triggers signaling via guanine nucleotide-binding proteins (G proteins) and modulates the activity of down-stream effectors. Signaling inhibits adenylate cyclase activity. The sequence is that of Metabotropic glutamate receptor 3 (Grm3) from Rattus norvegicus (Rat).